The following is a 613-amino-acid chain: tRNA (uracil-5-)-methyltransferase homolog A (613 aa).

Residues 1–46 (MSEPAAEVPEPMEDCGQDASAVPSSAAPLCQKEEAGPGPAAGPGTQ) form a disordered region. The region spanning 63 to 136 (FKLELQNVPR…CPLSVRLARP (74 aa)) is the RRM domain. Positions 170 to 200 (YTEQLEQKRLECERVLQKLAKEIGNTNRALL) form a coiled coil. Phosphoserine is present on Ser368. The S-adenosyl-L-methionine site is built by Gln401, Glu451, and Asp500. The active-site Nucleophile is Cys528. The active-site Proton acceptor is the Glu571.

The protein belongs to the class I-like SAM-binding methyltransferase superfamily. RNA M5U methyltransferase family. In terms of tissue distribution, widely expressed at low level. Expressed at higher level in proliferating cells.

The protein localises to the cytoplasm. It is found in the cytosol. It catalyses the reaction uridine(54) in tRNA + S-adenosyl-L-methionine = 5-methyluridine(54) in tRNA + S-adenosyl-L-homocysteine + H(+). The enzyme catalyses a uridine in mRNA + S-adenosyl-L-methionine = a 5-methyluridine in mRNA + S-adenosyl-L-homocysteine + H(+). S-adenosyl-L-methionine-dependent methyltransferase that catalyzes the formation of 5-methyl-uridine in tRNAs and some mRNAs. Mainly catalyzes the methylation of uridine at position 54 (m5U54) in cytosolic tRNAs. Also able to mediate the formation of 5-methyl-uridine in some mRNAs. In Mus musculus (Mouse), this protein is tRNA (uracil-5-)-methyltransferase homolog A.